The following is a 343-amino-acid chain: tRNA N6-adenosine threonylcarbamoyltransferase (343 aa).

Residues histidine 115 and histidine 119 each coordinate Fe cation. Residues 137–141 (LVSGG), aspartate 170, glycine 183, aspartate 187, and asparagine 276 contribute to the substrate site. Aspartate 306 contacts Fe cation.

This sequence belongs to the KAE1 / TsaD family. Fe(2+) is required as a cofactor.

The protein resides in the cytoplasm. The catalysed reaction is L-threonylcarbamoyladenylate + adenosine(37) in tRNA = N(6)-L-threonylcarbamoyladenosine(37) in tRNA + AMP + H(+). Functionally, required for the formation of a threonylcarbamoyl group on adenosine at position 37 (t(6)A37) in tRNAs that read codons beginning with adenine. Is involved in the transfer of the threonylcarbamoyl moiety of threonylcarbamoyl-AMP (TC-AMP) to the N6 group of A37, together with TsaE and TsaB. TsaD likely plays a direct catalytic role in this reaction. In Limosilactobacillus reuteri (strain DSM 20016) (Lactobacillus reuteri), this protein is tRNA N6-adenosine threonylcarbamoyltransferase.